The primary structure comprises 631 residues: ATP-dependent RNA helicase mrh4, mitochondrial (631 aa).

The transit peptide at 1–45 (MNRLGRLPLPLPPSVCLFCQSRATTPLPPSLQATRSMATARLRRR) directs the protein to the mitochondrion. Residues 68–111 (KERFGPFAGMNQTEARIRDKPRTRSRAAQKRSGEPEEDSQKESP) form a disordered region. A compositionally biased stretch (basic and acidic residues) spans 98 to 108 (RSGEPEEDSQK). The short motif at 141–174 (TSFDQFQLLPVVRNSISSQALPGLVDVTPTPIQR) is the Q motif element. The span at 180–193 (LLEEPKTEKKPTKA) shows a compositional bias: basic and acidic residues. The interval 180–199 (LLEEPKTEKKPTKADDDEPQ) is disordered. One can recognise a Helicase ATP-binding domain in the interval 194–406 (DDDEPQYDQY…RKRYPDIKRL (213 aa)). 207–214 (AETGSGKT) contacts ATP. Positions 229–249 (EARDKELEKKEQEEKAREREE) are disordered. A DEAD box motif is present at residues 353–356 (DEAD). Positions 455-631 (GPYASYVAPK…EGMFRGQALI (177 aa)) constitute a Helicase C-terminal domain.

It belongs to the DEAD box helicase family. MRH4 subfamily.

Its subcellular location is the mitochondrion. It catalyses the reaction ATP + H2O = ADP + phosphate + H(+). Its function is as follows. ATP-binding RNA helicase involved in mitochondrial RNA metabolism. Required for maintenance of mitochondrial DNA. In Neosartorya fischeri (strain ATCC 1020 / DSM 3700 / CBS 544.65 / FGSC A1164 / JCM 1740 / NRRL 181 / WB 181) (Aspergillus fischerianus), this protein is ATP-dependent RNA helicase mrh4, mitochondrial (mrh4).